The sequence spans 188 residues: ATP synthase subunit delta (188 aa).

It belongs to the ATPase delta chain family. F-type ATPases have 2 components, F(1) - the catalytic core - and F(0) - the membrane proton channel. F(1) has five subunits: alpha(3), beta(3), gamma(1), delta(1), epsilon(1). F(0) has three main subunits: a(1), b(2) and c(10-14). The alpha and beta chains form an alternating ring which encloses part of the gamma chain. F(1) is attached to F(0) by a central stalk formed by the gamma and epsilon chains, while a peripheral stalk is formed by the delta and b chains.

It is found in the cell inner membrane. Its function is as follows. F(1)F(0) ATP synthase produces ATP from ADP in the presence of a proton or sodium gradient. F-type ATPases consist of two structural domains, F(1) containing the extramembraneous catalytic core and F(0) containing the membrane proton channel, linked together by a central stalk and a peripheral stalk. During catalysis, ATP synthesis in the catalytic domain of F(1) is coupled via a rotary mechanism of the central stalk subunits to proton translocation. This protein is part of the stalk that links CF(0) to CF(1). It either transmits conformational changes from CF(0) to CF(1) or is implicated in proton conduction. The protein is ATP synthase subunit delta of Agrobacterium fabrum (strain C58 / ATCC 33970) (Agrobacterium tumefaciens (strain C58)).